The chain runs to 174 residues: Small ribosomal subunit protein uS5 (174 aa).

An S5 DRBM domain is found at 16–79; it reads LSELLVSVRR…NAAKKSMIRV (64 aa).

This sequence belongs to the universal ribosomal protein uS5 family. Part of the 30S ribosomal subunit. Contacts proteins S4 and S8.

In terms of biological role, with S4 and S12 plays an important role in translational accuracy. Functionally, located at the back of the 30S subunit body where it stabilizes the conformation of the head with respect to the body. In Anaplasma marginale (strain Florida), this protein is Small ribosomal subunit protein uS5.